The primary structure comprises 502 residues: NAD(P)H-quinone oxidoreductase subunit 2, chloroplastic (502 aa).

Transmembrane regions (helical) follow at residues 15 to 35 (VLPEAIIICSSLFILIIDLIF), 42 to 62 (VLPYMAILGLILSMLSLLFQW), 79 to 99 (LSIAFRLLIALSSMLCVLLSI), 108 to 128 (TLSEFLVIFLTATLGAMLLCG), 132 to 152 (ILMIFLSLETLGLCSYILTGY), 167 to 187 (LLIGAASSSILLYGFSLLYGL), 210 to 230 (LASLVALALIIVGISFKIAAA), 253 to 275 (VSSKAAGLMLATRIMTILFPYII), 278 to 298 (WHNIFQILAILSMAIGNIIAI), 307 to 327 (LGYSSIAQAGFLLVGLLAGNI), 334 to 354 (LVYMLIYLFMNLGAFACVILF), 375 to 395 (ILALCLSICLLSLGGIPPFGG), 413 to 433 (LLVFVGLLTSVISIFYYIKII), and 468 to 488 (ILICVIGTTISGIFVNPIISI).

Belongs to the complex I subunit 2 family. NDH is composed of at least 16 different subunits, 5 of which are encoded in the nucleus.

It is found in the plastid. Its subcellular location is the chloroplast thylakoid membrane. It carries out the reaction a plastoquinone + NADH + (n+1) H(+)(in) = a plastoquinol + NAD(+) + n H(+)(out). The catalysed reaction is a plastoquinone + NADPH + (n+1) H(+)(in) = a plastoquinol + NADP(+) + n H(+)(out). In terms of biological role, NDH shuttles electrons from NAD(P)H:plastoquinone, via FMN and iron-sulfur (Fe-S) centers, to quinones in the photosynthetic chain and possibly in a chloroplast respiratory chain. The immediate electron acceptor for the enzyme in this species is believed to be plastoquinone. Couples the redox reaction to proton translocation, and thus conserves the redox energy in a proton gradient. This is NAD(P)H-quinone oxidoreductase subunit 2, chloroplastic from Mesostigma viride (Green alga).